The primary structure comprises 314 residues: tRNA dimethylallyltransferase (314 aa).

13–20 (GPTASGKS) is a binding site for ATP. Substrate is bound at residue 15-20 (TASGKS). 2 interaction with substrate tRNA regions span residues 38–41 (DSMQ) and 161–165 (QRIAR).

It belongs to the IPP transferase family. Monomer. It depends on Mg(2+) as a cofactor.

It catalyses the reaction adenosine(37) in tRNA + dimethylallyl diphosphate = N(6)-dimethylallyladenosine(37) in tRNA + diphosphate. Functionally, catalyzes the transfer of a dimethylallyl group onto the adenine at position 37 in tRNAs that read codons beginning with uridine, leading to the formation of N6-(dimethylallyl)adenosine (i(6)A). This Parvibaculum lavamentivorans (strain DS-1 / DSM 13023 / NCIMB 13966) protein is tRNA dimethylallyltransferase.